A 420-amino-acid chain; its full sequence is Trophoblast glycoprotein (420 aa).

Residues 1–34 (MPGGCSRGPAAGDGRLRLARLALVLLGWVSSSSS) form the signal peptide. The Extracellular portion of the chain corresponds to 35 to 355 (TSSASSSSSS…PILPPSLQTS (321 aa)). One can recognise an LRRNT domain in the interval 53-91 (SAQPPLPDQCPALCECSEAARTVKCVNRNLTEVPTDLPL). 2 disulfides stabilise this stretch: cysteine 62/cysteine 68 and cysteine 66/cysteine 77. A glycan (N-linked (GlcNAc...) asparagine) is linked at asparagine 81. LRR repeat units lie at residues 92–113 (YVRNLFLTGNQLAVLPAGAFAR), 116–139 (PLAELAALNLSGSRLDEVRGGAFE), 141–163 (LPSLRQLDLSHNPLAYLSPFAFS), 172–204 (PSPLVELILNHIVPPDDKRQNRSFEGMVAAALV), 209–232 (LQGLHLLELASNHFLYLPRDVLAQ), 233–255 (LPSLRYLDLSNNSLVSLTYVSFR), and 256–275 (NLTHLESLHLEDNALKVLHN). Asparagine 124 carries N-linked (GlcNAc...) asparagine glycosylation. An N-linked (GlcNAc...) asparagine glycan is attached at asparagine 275. An LRRCT domain is found at 283 to 346 (GLPHVRVFLD…LNSADLDCDP (64 aa)). 2 cysteine pairs are disulfide-bonded: cysteine 298–cysteine 323 and cysteine 300–cysteine 344. Residues 356 to 376 (YVFLGIVLALIGAIFLLVLYL) traverse the membrane as a helical segment. Topologically, residues 377–420 (NRKGIKKWMHNIRDACRDHMEGYHYRYEINADPRLTNLSSNSDV) are cytoplasmic. Serine 418 carries the post-translational modification Phosphoserine.

In terms of processing, highly glycosylated.

It is found in the cell membrane. In terms of biological role, may function as an inhibitor of Wnt/beta-catenin signaling by indirectly interacting with LRP6 and blocking Wnt3a-dependent LRP6 internalization. In Macaca fascicularis (Crab-eating macaque), this protein is Trophoblast glycoprotein (TPBG).